A 261-amino-acid polypeptide reads, in one-letter code: uncharacterized protein (261 aa).

An ABC transporter domain is found at 1-236; sequence MEIKEITIIG…SRKINEVDNW (236 aa). 36-43 serves as a coordination point for ATP; it reads GPTGSGKS.

It belongs to the ABC transporter superfamily.

This is an uncharacterized protein from Methanocaldococcus jannaschii (strain ATCC 43067 / DSM 2661 / JAL-1 / JCM 10045 / NBRC 100440) (Methanococcus jannaschii).